The following is a 137-amino-acid chain: uncharacterized protein (137 aa).

Residues 1 to 15 (MKKLAIAGALLLLAG) form the signal peptide. Residue Cys-16 is the site of N-palmitoyl cysteine attachment. The S-diacylglycerol cysteine moiety is linked to residue Cys-16.

The protein resides in the cell membrane. This is an uncharacterized protein from Escherichia coli (strain K12).